A 139-amino-acid chain; its full sequence is Large ribosomal subunit protein uL16c (139 aa).

Belongs to the universal ribosomal protein uL16 family. In terms of assembly, part of the 50S ribosomal subunit.

It is found in the plastid. It localises to the chloroplast. This chain is Large ribosomal subunit protein uL16c, found in Cicer arietinum (Chickpea).